A 660-amino-acid chain; its full sequence is Arginine--tRNA ligase, cytoplasmic (660 aa).

Position 1 is an N-acetylmethionine (Met-1). A could be involved in the assembly of the multisynthetase complex region spans residues Met-1 to Asn-72. L-arginine contacts are provided by residues Ser-200 to Asn-202, His-211, Tyr-384, Asp-388, and Gln-412. The short motif at Pro-201–Leu-212 is the 'HIGH' region element. Residues Asn-529–Ser-543 are interaction with tRNA.

It belongs to the class-I aminoacyl-tRNA synthetase family. As to quaternary structure, interacts (via N-terminus) with AIMP1 (via N-terminus); this stimulates its catalytic activity. Interacts (via N-terminus) with LARS2 (via C-terminus). Monomer. Part of a multisubunit complex that groups tRNA ligases for Arg (RARS1), Asp (DARS1), Gln (QARS1), Ile (IARS1), Leu (LARS1), Lys (KARS1), Met (MARS1) the bifunctional ligase for Glu and Pro (EPRS1) and the auxiliary subunits AIMP1/p43, AIMP2/p38 and EEF1E1/p18. Interacts with QARS1. Part of a complex composed of RARS1, QARS1 and AIMP1.

Its subcellular location is the cytoplasm. It is found in the cytosol. The enzyme catalyses tRNA(Arg) + L-arginine + ATP = L-arginyl-tRNA(Arg) + AMP + diphosphate. Functionally, forms part of a macromolecular complex that catalyzes the attachment of specific amino acids to cognate tRNAs during protein synthesis. Modulates the secretion of AIMP1 and may be involved in generation of the inflammatory cytokine EMAP2 from AIMP1. The sequence is that of Arginine--tRNA ligase, cytoplasmic (Rars1) from Mus musculus (Mouse).